Reading from the N-terminus, the 250-residue chain is Hydroxyacylglutathione hydrolase (250 aa).

7 residues coordinate Zn(2+): histidine 52, histidine 54, aspartate 56, histidine 57, histidine 107, aspartate 128, and histidine 166.

It belongs to the metallo-beta-lactamase superfamily. Glyoxalase II family. In terms of assembly, monomer. It depends on Zn(2+) as a cofactor.

It carries out the reaction an S-(2-hydroxyacyl)glutathione + H2O = a 2-hydroxy carboxylate + glutathione + H(+). It functions in the pathway secondary metabolite metabolism; methylglyoxal degradation; (R)-lactate from methylglyoxal: step 2/2. In terms of biological role, thiolesterase that catalyzes the hydrolysis of S-D-lactoyl-glutathione to form glutathione and D-lactic acid. The protein is Hydroxyacylglutathione hydrolase of Neisseria gonorrhoeae (strain NCCP11945).